The primary structure comprises 374 residues: DNA replication and repair protein RecF (374 aa).

34–41 is an ATP binding site; the sequence is GNNGSGKT.

It belongs to the RecF family.

It is found in the cytoplasm. In terms of biological role, the RecF protein is involved in DNA metabolism; it is required for DNA replication and normal SOS inducibility. RecF binds preferentially to single-stranded, linear DNA. It also seems to bind ATP. The polypeptide is DNA replication and repair protein RecF (Allorhizobium ampelinum (strain ATCC BAA-846 / DSM 112012 / S4) (Agrobacterium vitis (strain S4))).